The primary structure comprises 739 residues: Catalase-peroxidase (739 aa).

Positions 99–227 (WHSAGTYRMG…LAAVQMGLIY (129 aa)) form a cross-link, tryptophyl-tyrosyl-methioninium (Trp-Tyr) (with M-253). The Proton acceptor role is filled by His-100. The segment at residues 227–253 (YVNPEGPDGNPDPVASGRDVRETFARM) is a cross-link (tryptophyl-tyrosyl-methioninium (Tyr-Met) (with W-99)). His-268 lines the heme b pocket.

This sequence belongs to the peroxidase family. Peroxidase/catalase subfamily. In terms of assembly, homodimer or homotetramer. Heme b is required as a cofactor. Post-translationally, formation of the three residue Trp-Tyr-Met cross-link is important for the catalase, but not the peroxidase activity of the enzyme.

The enzyme catalyses H2O2 + AH2 = A + 2 H2O. The catalysed reaction is 2 H2O2 = O2 + 2 H2O. Functionally, bifunctional enzyme with both catalase and broad-spectrum peroxidase activity. The protein is Catalase-peroxidase of Syntrophotalea carbinolica (strain DSM 2380 / NBRC 103641 / GraBd1) (Pelobacter carbinolicus).